The following is a 1298-amino-acid chain: Phosphoribosylformylglycinamidine synthase (1298 aa).

Residues 303 to 327 (FPGAATGSGGEIRDEGATGRGAKPK) are disordered. Residues 305–316 (GAATGSGGEIRD), 384–386 (TGY), and alanine 676 contribute to the ATP site. Residues aspartate 677, glutamate 716, asparagine 720, and aspartate 884 each contribute to the Mg(2+) site. An ATP-binding site is contributed by serine 886. Residues 1045–1298 (VAVLREQGVN…MFRNARAWVN (254 aa)) form the Glutamine amidotransferase type-1 domain. The active-site Nucleophile is cysteine 1138. Active-site residues include histidine 1263 and glutamate 1265.

The protein in the N-terminal section; belongs to the FGAMS family. Monomer.

The protein resides in the cytoplasm. The enzyme catalyses N(2)-formyl-N(1)-(5-phospho-beta-D-ribosyl)glycinamide + L-glutamine + ATP + H2O = 2-formamido-N(1)-(5-O-phospho-beta-D-ribosyl)acetamidine + L-glutamate + ADP + phosphate + H(+). The protein operates within purine metabolism; IMP biosynthesis via de novo pathway; 5-amino-1-(5-phospho-D-ribosyl)imidazole from N(2)-formyl-N(1)-(5-phospho-D-ribosyl)glycinamide: step 1/2. Its function is as follows. Phosphoribosylformylglycinamidine synthase involved in the purines biosynthetic pathway. Catalyzes the ATP-dependent conversion of formylglycinamide ribonucleotide (FGAR) and glutamine to yield formylglycinamidine ribonucleotide (FGAM) and glutamate. The protein is Phosphoribosylformylglycinamidine synthase of Pseudomonas syringae pv. tomato (strain ATCC BAA-871 / DC3000).